The chain runs to 394 residues: Probable pectate lyase 16 (394 aa).

The signal sequence occupies residues 1 to 22; the sequence is MTLFTVSCLLVVLFLCHSLVHA. Ca(2+)-binding residues include Asp-192, Asp-216, and Asp-220. Arg-272 is a catalytic residue.

This sequence belongs to the polysaccharide lyase 1 family. It depends on Ca(2+) as a cofactor.

It catalyses the reaction Eliminative cleavage of (1-&gt;4)-alpha-D-galacturonan to give oligosaccharides with 4-deoxy-alpha-D-galact-4-enuronosyl groups at their non-reducing ends.. The protein operates within glycan metabolism; pectin degradation; 2-dehydro-3-deoxy-D-gluconate from pectin: step 2/5. The protein is Probable pectate lyase 16 of Arabidopsis thaliana (Mouse-ear cress).